Consider the following 132-residue polypeptide: Agouti-signaling protein (132 aa).

The N-terminal stretch at 1 to 22 (MDVTRLLLATLLVFLCFFTANS) is a signal peptide. An N-linked (GlcNAc...) asparagine glycan is attached at asparagine 39. The segment at 61–87 (QIGRKEAEKKRSSKKEASMKKVARPRT) is disordered. Residues 63–79 (GRKEAEKKRSSKKEASM) show a composition bias toward basic and acidic residues. 5 disulfide bridges follow: cysteine 93–cysteine 108, cysteine 100–cysteine 114, cysteine 107–cysteine 125, cysteine 111–cysteine 132, and cysteine 116–cysteine 123. One can recognise an Agouti domain in the interval 93 to 132 (CVATRNSCKPPAPACCDPCASCQCRFFRSACSCRVLSLNC).

The protein resides in the secreted. Involved in the regulation of melanogenesis. The binding of ASP to MC1R precludes alpha-MSH initiated signaling and thus blocks production of cAMP, leading to a down-regulation of eumelanogenesis (brown/black pigment) and thus increasing synthesis of pheomelanin (yellow/red pigment). In Gorilla gorilla gorilla (Western lowland gorilla), this protein is Agouti-signaling protein (ASIP).